The sequence spans 436 residues: Enolase (436 aa).

Residue Gln-167 participates in (2R)-2-phosphoglycerate binding. The Proton donor role is filled by Glu-209. Mg(2+) contacts are provided by Asp-246, Glu-291, and Asp-318. Residues Lys-343, Arg-372, Ser-373, and Lys-394 each coordinate (2R)-2-phosphoglycerate. The active-site Proton acceptor is Lys-343.

The protein belongs to the enolase family. Component of the RNA degradosome, a multiprotein complex involved in RNA processing and mRNA degradation. It depends on Mg(2+) as a cofactor.

Its subcellular location is the cytoplasm. The protein resides in the secreted. It localises to the cell surface. The catalysed reaction is (2R)-2-phosphoglycerate = phosphoenolpyruvate + H2O. The protein operates within carbohydrate degradation; glycolysis; pyruvate from D-glyceraldehyde 3-phosphate: step 4/5. Functionally, catalyzes the reversible conversion of 2-phosphoglycerate (2-PG) into phosphoenolpyruvate (PEP). It is essential for the degradation of carbohydrates via glycolysis. The protein is Enolase of Haemophilus influenzae (strain PittEE).